The following is an 875-amino-acid chain: Translation initiation factor IF-2 (875 aa).

Disordered regions lie at residues 1 to 20 (MSDSDKKPTLGRRPLGLKTA), 47 to 102 (LMGR…LREA), and 126 to 246 (EEER…DRRG). A compositionally biased stretch (low complexity) spans 54–66 (AAPTAAPAAAATP). Residues 67-85 (APTPVAPPPPPPPPPPPPS) show a composition bias toward pro residues. Composition is skewed to basic and acidic residues over residues 88–102 (RETRQEMQVRLLREA) and 126–140 (EEERRRAEEKARAEA). Composition is skewed to low complexity over residues 141 to 195 (EAAA…PAAP) and 202 to 221 (PAAPAVPAPRRFTPVAPAAP). A compositionally biased stretch (basic and acidic residues) spans 223-246 (KRPELAAKKPAHPQRDRKTEDRRG). The region spanning 374–544 (ARPPVVTIMG…LLQAELLELK (171 aa)) is the tr-type G domain. The tract at residues 383 to 390 (GHVDHGKT) is G1. 383–390 (GHVDHGKT) is a binding site for GTP. Residues 408–412 (GITQH) are G2. The segment at 430 to 433 (DTPG) is G3. Residues 430–434 (DTPGH) and 484–487 (TKAD) each bind GTP. Residues 484 to 487 (TKAD) are G4. The interval 520-522 (SAK) is G5.

It belongs to the TRAFAC class translation factor GTPase superfamily. Classic translation factor GTPase family. IF-2 subfamily.

The protein resides in the cytoplasm. In terms of biological role, one of the essential components for the initiation of protein synthesis. Protects formylmethionyl-tRNA from spontaneous hydrolysis and promotes its binding to the 30S ribosomal subunits. Also involved in the hydrolysis of GTP during the formation of the 70S ribosomal complex. This is Translation initiation factor IF-2 from Novosphingobium aromaticivorans (strain ATCC 700278 / DSM 12444 / CCUG 56034 / CIP 105152 / NBRC 16084 / F199).